A 142-amino-acid chain; its full sequence is Transcription antitermination protein NusB (142 aa).

This sequence belongs to the NusB family.

Functionally, involved in transcription antitermination. Required for transcription of ribosomal RNA (rRNA) genes. Binds specifically to the boxA antiterminator sequence of the ribosomal RNA (rrn) operons. This Buchnera aphidicola subsp. Cinara cedri (strain Cc) protein is Transcription antitermination protein NusB.